Here is a 248-residue protein sequence, read N- to C-terminus: Membrane-spanning 4-domains subfamily A member 6A (248 aa).

The Cytoplasmic segment spans residues 1-46 (MTSQPVPNETIIVLPSNVINFSQAEKPEPTNQGQDSLKKHLHAEIK). A helical transmembrane segment spans residues 47 to 67 (VIGTIQILCGMMVLSLGIILA). The Extracellular segment spans residues 68–84 (SASFSPNFTQVTSTLLN). A helical transmembrane segment spans residues 85–105 (SAYPFIGPFFFIISGSLSIAT). Topologically, residues 106–116 (EKRLTKLLVHS) are cytoplasmic. Residues 117-137 (SLVGSILSALSALVGFIILSV) form a helical membrane-spanning segment. Topologically, residues 138–185 (KQATLNPASLQCELDKNNIPTRSYVSYFYHDSLYTTDCYTAKASLAGT) are extracellular. Residues 186-206 (LSLMLICTLLEFCLAVLTAVL) traverse the membrane as a helical segment. Topologically, residues 207–248 (RWKQAYSDFPGSVLFLPHSYIGNSGMSSKMTHDCGYEELLTS) are cytoplasmic.

This sequence belongs to the MS4A family. In terms of tissue distribution, variable expression in some B-cell, myelomonocytic, and erythroleukemia cell lines.

Its subcellular location is the membrane. May be involved in signal transduction as a component of a multimeric receptor complex. This is Membrane-spanning 4-domains subfamily A member 6A (MS4A6A) from Homo sapiens (Human).